The sequence spans 66 residues: Period circadian protein (66 aa).

Positions 1–66 (EGSGGSGSSG…VTLTESLLNK (66 aa)) are disordered. Over residues 9 to 31 (SGNFTTGSNIHMSSVTNTSNAGT) the composition is skewed to low complexity. A run of 4 repeats spans residues 30-31 (GT), 32-33 (GT), 35-36 (GT), and 37-38 (GN). The interval 30 to 53 (GTGTSGTGNSGGGSGGGTGPGSGA) is 4 X 2 AA tandem repeats of G-[TN]. The span at 32–51 (GTSGTGNSGGGSGGGTGPGS) shows a compositional bias: gly residues.

As to quaternary structure, forms a heterodimer with timeless (TIM); the complex then translocates into the nucleus. In terms of processing, phosphorylated with a circadian rhythmicity, probably by the double-time protein (dbt). Phosphorylation could be implicated in the stability of per monomer and in the formation of heterodimer per-tim.

It is found in the nucleus. The protein localises to the cytoplasm. Its subcellular location is the perinuclear region. Functionally, essential for biological clock functions. Determines the period length of circadian and ultradian rhythms; an increase in PER dosage leads to shortened circadian rhythms and a decrease leads to lengthened circadian rhythms. Essential for the circadian rhythmicity of locomotor activity, eclosion behavior, and for the rhythmic component of the male courtship song that originates in the thoracic nervous system. The biological cycle depends on the rhythmic formation and nuclear localization of the TIM-PER complex. Light induces the degradation of TIM, which promotes elimination of PER. Nuclear activity of the heterodimer coordinatively regulates PER and TIM transcription through a negative feedback loop. Behaves as a negative element in circadian transcriptional loop. Does not appear to bind DNA, suggesting indirect transcriptional inhibition. This is Period circadian protein (per) from Drosophila saltans (Fruit fly).